Consider the following 295-residue polypeptide: Protoheme IX farnesyltransferase (295 aa).

9 helical membrane passes run 8–28 (VTKP…FLLA), 35–55 (YPLF…GCVF), 74–94 (VLVK…LLGI), 106–125 (PLAM…VYSL), 132–152 (VYGT…GYCA), 162–182 (LILL…IAIF), 208–228 (ITLY…GGYA), 233–253 (LVVA…GYKA), and 264–284 (FVFS…DFMV).

The protein belongs to the UbiA prenyltransferase family. Protoheme IX farnesyltransferase subfamily.

It is found in the cell inner membrane. It catalyses the reaction heme b + (2E,6E)-farnesyl diphosphate + H2O = Fe(II)-heme o + diphosphate. It participates in porphyrin-containing compound metabolism; heme O biosynthesis; heme O from protoheme: step 1/1. Its function is as follows. Converts heme B (protoheme IX) to heme O by substitution of the vinyl group on carbon 2 of heme B porphyrin ring with a hydroxyethyl farnesyl side group. The chain is Protoheme IX farnesyltransferase from Cronobacter sakazakii (strain ATCC BAA-894) (Enterobacter sakazakii).